Here is a 183-residue protein sequence, read N- to C-terminus: NADH-quinone oxidoreductase subunit B (183 aa).

Residues C60, C61, C125, and C154 each contribute to the [4Fe-4S] cluster site.

The protein belongs to the complex I 20 kDa subunit family. In terms of assembly, NDH-1 is composed of 14 different subunits. Subunits NuoB, C, D, E, F, and G constitute the peripheral sector of the complex. [4Fe-4S] cluster is required as a cofactor.

The protein resides in the cell inner membrane. The catalysed reaction is a quinone + NADH + 5 H(+)(in) = a quinol + NAD(+) + 4 H(+)(out). Functionally, NDH-1 shuttles electrons from NADH, via FMN and iron-sulfur (Fe-S) centers, to quinones in the respiratory chain. The immediate electron acceptor for the enzyme in this species is believed to be ubiquinone. Couples the redox reaction to proton translocation (for every two electrons transferred, four hydrogen ions are translocated across the cytoplasmic membrane), and thus conserves the redox energy in a proton gradient. The protein is NADH-quinone oxidoreductase subunit B of Desulfovibrio desulfuricans (strain ATCC 27774 / DSM 6949 / MB).